Consider the following 321-residue polypeptide: Ribose-phosphate pyrophosphokinase (321 aa).

ATP-binding positions include 44-46 and 103-104; these read DGE and RQ. 2 residues coordinate Mg(2+): histidine 137 and aspartate 179. Lysine 202 is an active-site residue. D-ribose 5-phosphate-binding positions include arginine 204, aspartate 228, and 232–236; that span reads DTAGT.

It belongs to the ribose-phosphate pyrophosphokinase family. Class I subfamily. In terms of assembly, homohexamer. Requires Mg(2+) as cofactor.

It is found in the cytoplasm. It catalyses the reaction D-ribose 5-phosphate + ATP = 5-phospho-alpha-D-ribose 1-diphosphate + AMP + H(+). Its pathway is metabolic intermediate biosynthesis; 5-phospho-alpha-D-ribose 1-diphosphate biosynthesis; 5-phospho-alpha-D-ribose 1-diphosphate from D-ribose 5-phosphate (route I): step 1/1. Involved in the biosynthesis of the central metabolite phospho-alpha-D-ribosyl-1-pyrophosphate (PRPP) via the transfer of pyrophosphoryl group from ATP to 1-hydroxyl of ribose-5-phosphate (Rib-5-P). This is Ribose-phosphate pyrophosphokinase from Staphylococcus aureus (strain COL).